The sequence spans 257 residues: Large ribosomal subunit protein uL3 (257 aa).

Positions 232 to 257 (LKAPKKQKTKVETNQVNPKIEEEKTK) are disordered.

The protein belongs to the universal ribosomal protein uL3 family. Part of the 50S ribosomal subunit. Forms a cluster with proteins L14 and L19.

In terms of biological role, one of the primary rRNA binding proteins, it binds directly near the 3'-end of the 23S rRNA, where it nucleates assembly of the 50S subunit. This chain is Large ribosomal subunit protein uL3, found in Mycoplasma genitalium (strain ATCC 33530 / DSM 19775 / NCTC 10195 / G37) (Mycoplasmoides genitalium).